The chain runs to 32 residues: Conotoxin Cltx-4 (32 aa).

Pro-2, Pro-24, Pro-28, and Pro-30 each carry 4-hydroxyproline. Position 32 is a serine amide (Ser-32).

Post-translationally, contains 4 disulfide bonds. As to expression, expressed by the venom duct.

It is found in the secreted. In Californiconus californicus (California cone), this protein is Conotoxin Cltx-4.